A 470-amino-acid polypeptide reads, in one-letter code: Sorting nexin-17 (470 aa).

One can recognise a PX domain in the interval 1 to 109 (MHFSIPETES…SFLRRAQQET (109 aa)). 4 residues coordinate a 1,2-diacyl-sn-glycero-3-phospho-(1D-myo-inositol-3-phosphate): Arg-36, Ser-38, Lys-62, and Arg-75. The Ras-associating domain maps to 115–206 (EEVSLEVLLS…YKIVLRKSYW (92 aa)). Positions 115–432 (EEVSLEVLLS…DASRESMVKL (318 aa)) are FERM-like. The interval 270–432 (GYLRFDACVA…DASRESMVKL (163 aa)) is PTB-like F3 module. A disordered region spans residues 401–425 (GGNLRRSDSQQAVKSPPLLESPDAS). Ser-407, Ser-409, Ser-415, Ser-421, Ser-437, and Ser-440 each carry phosphoserine.

The protein belongs to the sorting nexin family. As to quaternary structure, monomer. Interacts with APP (via cytoplasmic YXNPXY motif). Interacts with KIF1B. Interacts with the C-termini of P-selectin, PTC, LDLR, VLDLR, LRP1 and LRP8. Interacts with KRIT1 (via N-terminus). Interacts with HRAS. Interacts with ITGB1 and ITGB5 (via NPxY motif). Interacts with CCDC22 and CCDC93; the interaction associates SNX17 with the CCC complex. Interacts (via C-terminus) with VPS26C and VPS35L; the interactions are direct and associate SNX17 with the retriever complex.

It localises to the cytoplasm. The protein localises to the early endosome. It is found in the cytoplasmic vesicle membrane. Functionally, critical regulator of endosomal recycling of numerous surface proteins, including integrins, signaling receptor and channels. Binds to NPxY sequences in the cytoplasmic tails of target cargos. Associates with retriever and CCC complexes to prevent lysosomal degradation and promote cell surface recycling of numerous cargos such as integrins ITGB1, ITGB5 and their associated alpha subunits. Also required for maintenance of normal cell surface levels of APP and LRP1. Interacts with membranes containing phosphatidylinositol 3-phosphate (PtdIns(3P)). This Rattus norvegicus (Rat) protein is Sorting nexin-17 (Snx17).